The primary structure comprises 297 residues: Bifunctional protein FolD 2 (297 aa).

Residues 172–174 (GRG), Thr-199, and Val-240 contribute to the NADP(+) site.

The protein belongs to the tetrahydrofolate dehydrogenase/cyclohydrolase family. In terms of assembly, homodimer.

It catalyses the reaction (6R)-5,10-methylene-5,6,7,8-tetrahydrofolate + NADP(+) = (6R)-5,10-methenyltetrahydrofolate + NADPH. The enzyme catalyses (6R)-5,10-methenyltetrahydrofolate + H2O = (6R)-10-formyltetrahydrofolate + H(+). The protein operates within one-carbon metabolism; tetrahydrofolate interconversion. Catalyzes the oxidation of 5,10-methylenetetrahydrofolate to 5,10-methenyltetrahydrofolate and then the hydrolysis of 5,10-methenyltetrahydrofolate to 10-formyltetrahydrofolate. The polypeptide is Bifunctional protein FolD 2 (Paenarthrobacter aurescens (strain TC1)).